We begin with the raw amino-acid sequence, 681 residues long: DNA-directed RNA polymerase subunit beta' (681 aa).

Zn(2+) is bound by residues Cys-69, Cys-71, Cys-87, and Cys-90. Asp-490, Asp-492, and Asp-494 together coordinate Mg(2+).

It belongs to the RNA polymerase beta' chain family. RpoC1 subfamily. As to quaternary structure, in plastids the minimal PEP RNA polymerase catalytic core is composed of four subunits: alpha, beta, beta', and beta''. When a (nuclear-encoded) sigma factor is associated with the core the holoenzyme is formed, which can initiate transcription. It depends on Mg(2+) as a cofactor. Zn(2+) is required as a cofactor.

It localises to the plastid. The protein localises to the chloroplast. The enzyme catalyses RNA(n) + a ribonucleoside 5'-triphosphate = RNA(n+1) + diphosphate. Its function is as follows. DNA-dependent RNA polymerase catalyzes the transcription of DNA into RNA using the four ribonucleoside triphosphates as substrates. The polypeptide is DNA-directed RNA polymerase subunit beta' (Liriodendron tulipifera (Tuliptree)).